The following is a 105-amino-acid chain: Small ribosomal subunit protein uS10 (105 aa).

Belongs to the universal ribosomal protein uS10 family. In terms of assembly, part of the 30S ribosomal subunit.

Functionally, involved in the binding of tRNA to the ribosomes. The protein is Small ribosomal subunit protein uS10 of Rickettsia peacockii (strain Rustic).